The following is a 124-amino-acid chain: U12-barytoxin-Tl1a (124 aa).

A signal peptide spans 1-20 (MKTMIAWLVLLTFAAALCFA). Residues 21-78 (DEGLKQEHMNERKKSRFREDIPDEISEDLLLQEMEAMEAELLEKEMRMEENRNSREKR) constitute a propeptide that is removed on maturation. 3 disulfide bridges follow: Cys79/Cys99, Cys86/Cys104, and Cys98/Cys118.

The protein belongs to the neurotoxin 14 (magi-1) family. 04 (ICK-6) subfamily. In terms of tissue distribution, expressed by the venom gland.

Its subcellular location is the secreted. Ion channel inhibitor. The polypeptide is U12-barytoxin-Tl1a (Trittame loki (Brush-footed trapdoor spider)).